Consider the following 336-residue polypeptide: Inositol 2-dehydrogenase (336 aa).

Belongs to the Gfo/Idh/MocA family. In terms of assembly, homotetramer.

The enzyme catalyses myo-inositol + NAD(+) = scyllo-inosose + NADH + H(+). Its function is as follows. Involved in the oxidation of myo-inositol (MI) to 2-keto-myo-inositol (2KMI or 2-inosose). The protein is Inositol 2-dehydrogenase of Pseudomonas fluorescens (strain ATCC BAA-477 / NRRL B-23932 / Pf-5).